Here is a 313-residue protein sequence, read N- to C-terminus: Aspartate carbamoyltransferase catalytic subunit (313 aa).

Carbamoyl phosphate is bound by residues Arg-58 and Thr-59. Lys-86 lines the L-aspartate pocket. Positions 108, 136, and 139 each coordinate carbamoyl phosphate. Arg-169 and Arg-223 together coordinate L-aspartate. Residues Gly-264 and Pro-265 each coordinate carbamoyl phosphate.

The protein belongs to the aspartate/ornithine carbamoyltransferase superfamily. ATCase family. As to quaternary structure, heterododecamer (2C3:3R2) of six catalytic PyrB chains organized as two trimers (C3), and six regulatory PyrI chains organized as three dimers (R2).

It catalyses the reaction carbamoyl phosphate + L-aspartate = N-carbamoyl-L-aspartate + phosphate + H(+). Its pathway is pyrimidine metabolism; UMP biosynthesis via de novo pathway; (S)-dihydroorotate from bicarbonate: step 2/3. Functionally, catalyzes the condensation of carbamoyl phosphate and aspartate to form carbamoyl aspartate and inorganic phosphate, the committed step in the de novo pyrimidine nucleotide biosynthesis pathway. This is Aspartate carbamoyltransferase catalytic subunit from Syntrophotalea carbinolica (strain DSM 2380 / NBRC 103641 / GraBd1) (Pelobacter carbinolicus).